A 279-amino-acid polypeptide reads, in one-letter code: Dermonecrotic toxin StSicTox-betaIB1i (279 aa).

Residue histidine 12 is part of the active site. Residues glutamate 32 and aspartate 34 each coordinate Mg(2+). Histidine 48 serves as the catalytic Nucleophile. 2 disulfides stabilise this stretch: cysteine 52–cysteine 58 and cysteine 54–cysteine 198. Aspartate 92 provides a ligand contact to Mg(2+).

The protein belongs to the arthropod phospholipase D family. Class II subfamily. Class IIb sub-subfamily. Mg(2+) is required as a cofactor. Expressed by the venom gland.

The protein resides in the secreted. The enzyme catalyses an N-(acyl)-sphingosylphosphocholine = an N-(acyl)-sphingosyl-1,3-cyclic phosphate + choline. The catalysed reaction is N-hexanoyl-sphing-4-enine-1-phosphocholine = N-(hexanoyl)-sphing-4-enine-1,3-cyclic phosphate + choline. It carries out the reaction an N-(acyl)-sphingosylphosphoethanolamine = an N-(acyl)-sphingosyl-1,3-cyclic phosphate + ethanolamine. It catalyses the reaction N-dodecanoyl-heptadecasphing-4-enine-1-phosphoethanolamine = N-dodecanoyl-heptadecasphing-4-enine-1,3-cyclic phosphate + ethanolamine. The enzyme catalyses a 1-acyl-sn-glycero-3-phosphoethanolamine = a 1-acyl-sn-glycero-2,3-cyclic phosphate + ethanolamine. The catalysed reaction is 1-tetradecanoyl-sn-glycero-3-phosphoethanolamine = 1-tetradecanoyl-sn-glycero-2,3-cyclic phosphate + ethanolamine. Dermonecrotic toxins cleave the phosphodiester linkage between the phosphate and headgroup of certain phospholipids (sphingolipid and lysolipid substrates), forming an alcohol (often choline) and a cyclic phosphate. This toxin acts on lysophosphatidylethanolamine (LPE) and ceramide phosphoethanolamine (CPE) with high activity. This toxin acts on sphingomyelin (SM) with very low activity and is not active on lysophosphatidylserine (LPS), lysophosphatidylcholine (LPC) and lysophosphatidylglycerol (LPG). It acts by transphosphatidylation, releasing exclusively cyclic phosphate as second products. It is not surprising that spider toxins have affinity for ethanolamine-containing sphingolipids since they are common in insect prey. Induces dermonecrosis, hemolysis, increased vascular permeability, edema, inflammatory response, and platelet aggregation. The protein is Dermonecrotic toxin StSicTox-betaIB1i of Sicarius terrosus (Cave spider).